Here is a 138-residue protein sequence, read N- to C-terminus: MRTLWIVAVCLIGVEGSLLEFGMMILGETGKNPLTSYSFYGCYCGVGGKGTPKDATDRCCFVHDCCYGNLPDCSPKTDRYKYHRENGAIVCGKGTSCENRICECDRAAAICFRKNLKTYNYIYRNYPDFLCKKESEKC.

A signal peptide spans 1 to 16 (MRTLWIVAVCLIGVEG). Intrachain disulfides connect Cys-42/Cys-131, Cys-44/Cys-60, Cys-59/Cys-111, Cys-65/Cys-138, Cys-66/Cys-104, Cys-73/Cys-97, and Cys-91/Cys-102. Tyr-43, Gly-45, and Gly-47 together coordinate Ca(2+). Residue His-63 is part of the active site. Asp-64 is a binding site for Ca(2+). The active site involves Asp-105.

This sequence belongs to the phospholipase A2 family. Group II subfamily. D49 sub-subfamily. Monomer. Binds to calmodulin, coagulation factor X (F10), M-type PLA2 receptor (R-180). May also bind to 14-3-3 proteins gamma (YWHAG) and epsilon (YWHAE), and R25, a mitochondrial membrane protein. It depends on Ca(2+) as a cofactor. Expressed by the venom gland.

It localises to the secreted. The protein resides in the host cytoplasm. The protein localises to the host cytosol. It catalyses the reaction a 1,2-diacyl-sn-glycero-3-phosphocholine + H2O = a 1-acyl-sn-glycero-3-phosphocholine + a fatty acid + H(+). Its function is as follows. Snake venom phospholipase A2 (PLA2) that acts as a presynaptic neurotoxin, an inhibitor of blood coagulation, and has been found to bind with high affinity to intracellular proteins. The response of indirectly stimulated neuromuscular preparations to ammodytoxin (Atx) is triphasic. The first phase, the transient inhibition of the acetylcholine (ACh) release, starts soon after the addition of Atx and lasts for several minutes. This phase is probably independent of Atx enzymatic activity. The effect may be due to the specific binding of the toxin to presynaptic receptors. These receptors, called N-type receptors, are still unidentified. It is noteworthy that a neuronal isoform of the M-type PLA2 receptor (R180) has been identified as a high-affinity receptor for Atx in neuronal plasma membranes. It was demonstrated however that this receptor is not essential for expression of neurotoxicity by Atx. The second phase corresponds to an augmentation of neurotransmitter release. A peak is reached 10-20 minutes after exposure of the preparation to Atx and is followed by a gradual reduction. In this phase, the enzymatic activity of Atx of the mammalian is not significant. It is speculated that the increased release of neurotransmitter in this phase is induced by the interference of Atx with voltage-gated potassium channels. Measurements of ionic currents showed however that voltage-gated potassium channels are not affected by Atx. The third phase of the response of neuromuscular preparations to Atx, which corresponds to a complete and irreversible paralysis, is clearly dependent on the hydrolytic activity of the toxin. In addition to its presynaptic neurotoxicity, Atx shows an anticoagulant activity by binding with high affinity to activated coagulation factor X (F10) thus inhibiting the formation of the prothrombinase complex (FX/FV) and its activity (IC(50) is 20 nM). Surprisingly, Atx was discovered to bind intracellular proteins such as calmodulin (CaM) (IC(50) is 6 nM), 14-3-3 proteins gamma (YWHAG) and epsilon (YWHAE) (by similarity with AtxC), as well as R25 (by similarity with AtxC), a mitochondrial integral membrane protein found in cerebral cortex. These findings raised a doubt about the dogma of the exclusively extracellular action of PLA2s, defended by the potential instability of these molecules in the reducing environment of the eukaryotic cytosol coupled with their possible inability to act as enzymes in this cellular compartment, due to too low concentration of calcium ions. This hypothesis was challenged efficiently by demonstrating the internalization of AtxA into a culture cells, but still remains to be directly demonstrated in vivo. PLA2 catalyzes the calcium-dependent hydrolysis of the 2-acyl groups in 3-sn-phosphoglycerides. The chain is Basic phospholipase A2 ammodytoxin A from Vipera ammodytes ammodytes (Western sand viper).